A 499-amino-acid polypeptide reads, in one-letter code: Lysine--tRNA ligase (499 aa).

The Mg(2+) site is built by Glu408 and Glu415.

The protein belongs to the class-II aminoacyl-tRNA synthetase family. As to quaternary structure, homodimer. Requires Mg(2+) as cofactor.

It is found in the cytoplasm. The catalysed reaction is tRNA(Lys) + L-lysine + ATP = L-lysyl-tRNA(Lys) + AMP + diphosphate. The sequence is that of Lysine--tRNA ligase from Thermoanaerobacter pseudethanolicus (strain ATCC 33223 / 39E) (Clostridium thermohydrosulfuricum).